Reading from the N-terminus, the 444-residue chain is Ribulose bisphosphate carboxylase (444 aa).

Lys-163 serves as the catalytic Proton acceptor. Lys-165 contributes to the substrate binding site. Positions 189, 191, and 192 each coordinate Mg(2+). Lys-189 is subject to N6-carboxylysine. His-281 serves as the catalytic Proton acceptor. Substrate contacts are provided by residues Arg-282, His-314, 367-369 (SGG), and 389-392 (QLGG).

Belongs to the RuBisCO large chain family. Type III subfamily. As to quaternary structure, homodimer or homodecamer. In contrast to form I RuBisCO, the form III RuBisCO is composed solely of large subunits. Mg(2+) is required as a cofactor.

The enzyme catalyses 2 (2R)-3-phosphoglycerate + 2 H(+) = D-ribulose 1,5-bisphosphate + CO2 + H2O. It catalyses the reaction D-ribulose 1,5-bisphosphate + O2 = 2-phosphoglycolate + (2R)-3-phosphoglycerate + 2 H(+). In terms of biological role, catalyzes the addition of molecular CO(2) and H(2)O to ribulose 1,5-bisphosphate (RuBP), generating two molecules of 3-phosphoglycerate (3-PGA). Functions in an archaeal AMP degradation pathway, together with AMP phosphorylase and R15P isomerase. This is Ribulose bisphosphate carboxylase from Thermococcus onnurineus (strain NA1).